The chain runs to 122 residues: Small ribosomal subunit protein uS13 (122 aa).

Positions 99-122 (RGQRTHTNARTRKGPAKAIAGKKK) are disordered.

The protein belongs to the universal ribosomal protein uS13 family. Part of the 30S ribosomal subunit. Forms a loose heterodimer with protein S19. Forms two bridges to the 50S subunit in the 70S ribosome.

Located at the top of the head of the 30S subunit, it contacts several helices of the 16S rRNA. In the 70S ribosome it contacts the 23S rRNA (bridge B1a) and protein L5 of the 50S subunit (bridge B1b), connecting the 2 subunits; these bridges are implicated in subunit movement. Contacts the tRNAs in the A and P-sites. The protein is Small ribosomal subunit protein uS13 of Sinorhizobium medicae (strain WSM419) (Ensifer medicae).